Consider the following 119-residue polypeptide: Large ribosomal subunit protein uL24 (119 aa).

This sequence belongs to the universal ribosomal protein uL24 family. In terms of assembly, part of the 50S ribosomal subunit.

In terms of biological role, one of two assembly initiator proteins, it binds directly to the 5'-end of the 23S rRNA, where it nucleates assembly of the 50S subunit. Functionally, one of the proteins that surrounds the polypeptide exit tunnel on the outside of the subunit. The sequence is that of Large ribosomal subunit protein uL24 from Paenarthrobacter aurescens (strain TC1).